The chain runs to 43 residues: Protein PsbN (43 aa).

The chain crosses the membrane as a helical span at residues 7 to 27; sequence VAIFISGLLVSFTGYALYTAF.

This sequence belongs to the PsbN family.

It localises to the plastid. The protein localises to the chloroplast thylakoid membrane. Its function is as follows. May play a role in photosystem I and II biogenesis. The polypeptide is Protein PsbN (Daucus carota (Wild carrot)).